Consider the following 65-residue polypeptide: Hirudin-3B (65 aa).

An interaction with thrombin active site region spans residues 1–3 (VVY). Intrachain disulfides connect cysteine 6/cysteine 14, cysteine 16/cysteine 28, and cysteine 22/cysteine 39. Residues 40-65 (VTGEGTPKPQSHNDGDFEEIPEEYLQ) are disordered. Threonine 45 is a glycosylation site (O-linked (GalNAc...) threonine). The segment at 55 to 65 (DFEEIPEEYLQ) is interaction with fibrinogen-binding exosite of thrombin. The span at 55 to 65 (DFEEIPEEYLQ) shows a compositional bias: acidic residues. The residue at position 63 (tyrosine 63) is a Sulfotyrosine.

The protein belongs to the protease inhibitor I14 (hirudin) family.

It is found in the secreted. Its function is as follows. Hirudin is a potent thrombin-specific protease inhibitor. It forms a stable non-covalent complex with alpha-thrombin, thereby abolishing its ability to cleave fibrinogen. In Hirudo medicinalis (Medicinal leech), this protein is Hirudin-3B.